The sequence spans 408 residues: Dual-specificity RNA methyltransferase RlmN (408 aa).

Glutamate 120 functions as the Proton acceptor in the catalytic mechanism. The 250-residue stretch at 126–375 (EEGRGTLCIS…IRTPRGRDIL (250 aa)) folds into the Radical SAM core domain. Cysteine 133 and cysteine 378 are disulfide-bonded. Positions 140, 144, and 147 each coordinate [4Fe-4S] cluster. Residues 204 to 205 (GE), serine 236, 258 to 260 (SLH), and asparagine 335 each bind S-adenosyl-L-methionine. The active-site S-methylcysteine intermediate is cysteine 378.

This sequence belongs to the radical SAM superfamily. RlmN family. The cofactor is [4Fe-4S] cluster.

It is found in the cytoplasm. The catalysed reaction is adenosine(2503) in 23S rRNA + 2 reduced [2Fe-2S]-[ferredoxin] + 2 S-adenosyl-L-methionine = 2-methyladenosine(2503) in 23S rRNA + 5'-deoxyadenosine + L-methionine + 2 oxidized [2Fe-2S]-[ferredoxin] + S-adenosyl-L-homocysteine. It catalyses the reaction adenosine(37) in tRNA + 2 reduced [2Fe-2S]-[ferredoxin] + 2 S-adenosyl-L-methionine = 2-methyladenosine(37) in tRNA + 5'-deoxyadenosine + L-methionine + 2 oxidized [2Fe-2S]-[ferredoxin] + S-adenosyl-L-homocysteine. Specifically methylates position 2 of adenine 2503 in 23S rRNA and position 2 of adenine 37 in tRNAs. m2A2503 modification seems to play a crucial role in the proofreading step occurring at the peptidyl transferase center and thus would serve to optimize ribosomal fidelity. The polypeptide is Dual-specificity RNA methyltransferase RlmN (Rhizobium johnstonii (strain DSM 114642 / LMG 32736 / 3841) (Rhizobium leguminosarum bv. viciae)).